The primary structure comprises 845 residues: BLOC-2 complex member HPS5 homolog (845 aa).

The interval 239–268 (PTEEDLEDAKSMEGSDDNDNDQRSSPSGVK) is disordered.

This sequence belongs to the HPS5 family.

In terms of biological role, has a role in the biogenesis of eye pigment granules. Eye pigment granules are specialized forms of late endosomes or lysosomes. Biogenesis of pigment granules in the eye requires molecular components required for protein delivery to lysosomes. In Aedes aegypti (Yellowfever mosquito), this protein is BLOC-2 complex member HPS5 homolog.